We begin with the raw amino-acid sequence, 794 residues long: Mitochondrial intermediate peptidase (794 aa).

The N-terminal 39 residues, 1 to 39, are a transit peptide targeting the mitochondrion; sequence MRVTSSRLLQGGSLVSRVLKRRLNNASRTKKGWFSTRTL. His-581 provides a ligand contact to Zn(2+). The active site involves Glu-582. Zn(2+) is bound by residues His-585 and His-588.

It belongs to the peptidase M3 family. Zn(2+) is required as a cofactor.

The protein localises to the mitochondrion matrix. The enzyme catalyses Release of an N-terminal octapeptide as second stage of processing of some proteins imported into the mitochondrion.. In terms of biological role, cleaves proteins, imported into the mitochondrion, to their mature size. While most mitochondrial precursor proteins are processed to the mature form in one step by mitochondrial processing peptidase (MPP), the sequential cleavage by MIP of an octapeptide after initial processing by MPP is a required step for a subgroup of nuclear-encoded precursor proteins destined for the matrix or the inner membrane. In Debaryomyces hansenii (strain ATCC 36239 / CBS 767 / BCRC 21394 / JCM 1990 / NBRC 0083 / IGC 2968) (Yeast), this protein is Mitochondrial intermediate peptidase (OCT1).